Consider the following 282-residue polypeptide: Ribonuclease 3 (282 aa).

The RNase III domain maps to 18–141; the sequence is FVAFFKSLNI…LVAAIYEDLG (124 aa). Glu59 provides a ligand contact to Mg(2+). Asp63 is an active-site residue. Mg(2+) contacts are provided by Asp127 and Glu130. Glu130 is an active-site residue.

The protein belongs to the ribonuclease III family. Homodimer. It depends on Mg(2+) as a cofactor.

It localises to the cytoplasm. It carries out the reaction Endonucleolytic cleavage to 5'-phosphomonoester.. In terms of biological role, digests double-stranded RNA. Involved in the processing of primary rRNA transcript to yield the immediate precursors to the large and small rRNAs (23S and 16S). Processes some mRNAs, and tRNAs when they are encoded in the rRNA operon. Processes pre-crRNA and tracrRNA of type II CRISPR loci if present in the organism. The sequence is that of Ribonuclease 3 from Mycoplasmoides pneumoniae (strain ATCC 15531 / DSM 23978 / CIP 103766 / NBRC 14401 / NCTC 10119 / FH) (Mycoplasma pneumoniae).